A 467-amino-acid chain; its full sequence is Mothers against decapentaplegic homolog 2 (467 aa).

Ser-2 carries the post-translational modification N-acetylserine. Thr-8 is modified (phosphothreonine). One can recognise an MH1 domain in the interval 10–176 (PVVKRLLGWK…YQRVETPVLP (167 aa)). Position 19 is an N6-acetyllysine (Lys-19). The Zn(2+) site is built by Cys-74, Cys-149, Cys-161, and His-166. A compositionally biased stretch (polar residues) spans 207 to 217 (PAGIEPQSNYI). A disordered region spans residues 207–251 (PAGIEPQSNYIPETPPPGYISEDGETSDQQLNQSMDTGSPAELSP). Thr-220 carries the phosphothreonine modification. Residues 221 to 225 (PPPGY) carry the PY-motif motif. Over residues 233-243 (SDQQLNQSMDT) the composition is skewed to polar residues. At Ser-240 the chain carries Phosphoserine; by CAMK2. 6 positions are modified to phosphoserine: Ser-245, Ser-250, Ser-255, Ser-458, Ser-460, and Ser-464. The MH2 domain occupies 274-467 (WCSIAYYELN…SPSVRCSSMS (194 aa)). Ser-465 and Ser-467 each carry phosphoserine; by TGFBR1.

The protein belongs to the dwarfin/SMAD family. As to quaternary structure, monomer; in the absence of TGF-beta. Heterodimer; in the presence of TGF-beta. Forms a heterodimer with co-SMAD, SMAD4, in the nucleus to form the transactivation complex SMAD2/SMAD4. Found in a complex with SMAD3 and TRIM33 upon addition of TGF-beta. Identified in a complex that contains at least ZNF451, SMAD2, SMAD3 and SMAD4. Interacts (via the MH2 domain) with ZFYVE9; may form trimers with the SMAD4 co-SMAD. Interacts with TAZ/WWRT1. Interacts with FOXH1. Interacts with SNW1. Interacts with CREB-binding protein (CBP) and EP300. Interacts with SNON. Interacts with ALK4/ACVR1B. Interacts with SKOR1. Interacts with SKOR2. Interacts with PRDM16. Interacts (via MH2 domain) with LEMD3. Interacts with RBPMS. Interacts with WWP1. Interacts (dephosphorylated form, via the MH1 and MH2 domains) with RANBP3 (via its C-terminal R domain); the interaction results in the export of dephosphorylated SMAD3 out of the nucleus and termination of the TGF-beta signaling. Interacts with PDPK1 (via PH domain). Interacts with DAB2; the interactions are enhanced upon TGF-beta stimulation. Interacts with USP15. Interacts with PPP5C. Interacts with LDLRAD4 (via the SMAD interaction motif). Interacts (via MH2 domain) with PMEPA1 (via the SMAD interaction motif). Interacts with ZFHX3. Interacts with ZNF451. Interacts with SMURF2 when phosphorylated on Ser-465/467. Interacts with PPM1A. Interacts with TGF-beta. Interacts with TGFBR1. Interacts with TGIF. Interacts with SMAD3 and TRIM33. Interacts with ZNF580. Interacts with NEDD4L in response to TGF-beta. Interacts with HGS. Interacts with AIP1. Interacts with WWP1. Interacts with PML. Interacts weakly with ZNF8. Interacts (when phosphorylated) with RNF111; RNF111 acts as an enhancer of the transcriptional responses by mediating ubiquitination and degradation of SMAD2 inhibitors. Interacts with YAP1 (when phosphorylated at 'Ser-55'). Interacts when phosphorylated with IPO7; the interaction facilitates translocation of SMAD2 to the nucleus. Interacts with MTMR4; negatively regulates TGF-beta signaling through SMAD2 dephosphorylation and retention in endosomes. In terms of processing, in response to TGF-beta, phosphorylated on the C-terminal SXS motif by TGF-beta and activin type 1 receptor kinases, phosphorylation declines progressively in a KMT5A-dependent manner. Phosphorylation in this motif is required for interaction with a number of proteins including SMURF2, SNON and SMAD4 in response to TGF-beta. Dephosphorylated in this motif by PPM1A leading to disruption of the SMAD2/3-SMAD4 complex, nuclear export and termination of the TGF-beta signaling. In response to decorin, the naturally occurring inhibitor of TGF-beta signaling, phosphorylated on Ser-240 by CaMK2. Phosphorylated by MAPK3 upon EGF stimulation; which increases transcriptional activity and stability, and is blocked by calmodulin. Phosphorylated by PDPK1. Acetylated on Lys-19 by coactivators in response to TGF-beta signaling, which increases transcriptional activity. Post-translationally, in response to TGF-beta, ubiquitinated by NEDD4L; which promotes its degradation. Monoubiquitinated, leading to prevent DNA-binding. Deubiquitination by USP15 alleviates inhibition and promotes activation of TGF-beta target genes. Ubiquitinated by RNF111, leading to its degradation: only SMAD2 proteins that are 'in use' are targeted by RNF111, RNF111 playing a key role in activating SMAD2 and regulating its turnover.

The protein resides in the cytoplasm. It is found in the nucleus. Functionally, receptor-regulated SMAD (R-SMAD) that is an intracellular signal transducer and transcriptional modulator activated by TGF-beta (transforming growth factor) and activin type 1 receptor kinases. Binds the TRE element in the promoter region of many genes that are regulated by TGF-beta and, on formation of the SMAD2/SMAD4 complex, activates transcription. Promotes TGFB1-mediated transcription of odontoblastic differentiation genes in dental papilla cells. Positively regulates PDPK1 kinase activity by stimulating its dissociation from the 14-3-3 protein YWHAQ which acts as a negative regulator. The sequence is that of Mothers against decapentaplegic homolog 2 (SMAD2) from Pongo abelii (Sumatran orangutan).